A 92-amino-acid chain; its full sequence is Small ribosomal subunit protein uS19 (92 aa).

The protein belongs to the universal ribosomal protein uS19 family.

Protein S19 forms a complex with S13 that binds strongly to the 16S ribosomal RNA. This is Small ribosomal subunit protein uS19 from Vibrio vulnificus (strain CMCP6).